Consider the following 449-residue polypeptide: Glucose-6-phosphate isomerase (449 aa).

Glutamate 291 functions as the Proton donor in the catalytic mechanism. Active-site residues include histidine 312 and lysine 426.

The protein belongs to the GPI family.

The protein resides in the cytoplasm. The catalysed reaction is alpha-D-glucose 6-phosphate = beta-D-fructose 6-phosphate. The protein operates within carbohydrate biosynthesis; gluconeogenesis. It participates in carbohydrate degradation; glycolysis; D-glyceraldehyde 3-phosphate and glycerone phosphate from D-glucose: step 2/4. Functionally, catalyzes the reversible isomerization of glucose-6-phosphate to fructose-6-phosphate. The sequence is that of Glucose-6-phosphate isomerase from Streptococcus pneumoniae (strain CGSP14).